Reading from the N-terminus, the 133-residue chain is Large ribosomal subunit protein uL15 (133 aa).

The interval 1 to 57 (MALEKLTPAAGSTHATKRIGRGQGSGNGKTAGKGNKGQRARKGYNEKRGFEGGQQPL) is disordered. Residues 21–35 (RGQGSGNGKTAGKGN) are compositionally biased toward gly residues.

Belongs to the universal ribosomal protein uL15 family. In terms of assembly, part of the 50S ribosomal subunit.

Its function is as follows. Binds to the 23S rRNA. The protein is Large ribosomal subunit protein uL15 of Campylobacter concisus (strain 13826).